Consider the following 82-residue polypeptide: Small ribosomal subunit protein uS17 (82 aa).

This sequence belongs to the universal ribosomal protein uS17 family. In terms of assembly, part of the 30S ribosomal subunit.

Functionally, one of the primary rRNA binding proteins, it binds specifically to the 5'-end of 16S ribosomal RNA. This is Small ribosomal subunit protein uS17 from Synechococcus elongatus (strain ATCC 33912 / PCC 7942 / FACHB-805) (Anacystis nidulans R2).